The chain runs to 636 residues: Chaperone protein DnaK (636 aa).

The disordered stretch occupies residues 579–636 (ELYKNAAPPPGADGQQGADGQQGADGQQGADGQQGADGQQGADGQTTESSSNDETKTN). The span at 590–623 (ADGQQGADGQQGADGQQGADGQQGADGQQGADGQ) shows a compositional bias: low complexity.

This sequence belongs to the heat shock protein 70 family.

Its function is as follows. Acts as a chaperone. The protein is Chaperone protein DnaK of Nitrosopumilus maritimus (strain SCM1).